The sequence spans 264 residues: Methionine aminopeptidase (264 aa).

Histidine 79 contributes to the substrate binding site. Residues aspartate 97, aspartate 108, and histidine 171 each coordinate a divalent metal cation. Substrate is bound at residue histidine 178. A divalent metal cation contacts are provided by glutamate 204 and glutamate 235.

The protein belongs to the peptidase M24A family. Methionine aminopeptidase type 1 subfamily. Monomer. Co(2+) is required as a cofactor. It depends on Zn(2+) as a cofactor. Mn(2+) serves as cofactor. Requires Fe(2+) as cofactor.

It carries out the reaction Release of N-terminal amino acids, preferentially methionine, from peptides and arylamides.. Its function is as follows. Removes the N-terminal methionine from nascent proteins. The N-terminal methionine is often cleaved when the second residue in the primary sequence is small and uncharged (Met-Ala-, Cys, Gly, Pro, Ser, Thr, or Val). Requires deformylation of the N(alpha)-formylated initiator methionine before it can be hydrolyzed. This Buchnera aphidicola subsp. Acyrthosiphon pisum (strain APS) (Acyrthosiphon pisum symbiotic bacterium) protein is Methionine aminopeptidase.